Reading from the N-terminus, the 180-residue chain is CASP-like protein 2D1 (180 aa).

Residues 1–7 (MAASGLK) are Cytoplasmic-facing. A helical transmembrane segment spans residues 8–28 (VPEMALRVCVVPLALASLWEM). Residues 29–48 (ATNAQADDTYGEVKFSDLSG) are Extracellular-facing. Residues 49 to 69 (FSYLVGVNAVTAAYALVSILL) form a helical membrane-spanning segment. Residues 70–79 (SSLKPLARYD) are Cytoplasmic-facing. The helical transmembrane segment at 80 to 100 (WVILVMDQASAYLLVTSASAA) threads the bilayer. The Extracellular portion of the chain corresponds to 101 to 129 (AELLQLARRGDREVSWGEVCSYFGRFCGK). A helical transmembrane segment spans residues 130–150 (ATVSLALHAAALACFVALALV). Residues 151 to 180 (SAFRVLSTTGSSCHPPKHAQAQEHEQGRYN) are Cytoplasmic-facing. Residues 161 to 180 (SSCHPPKHAQAQEHEQGRYN) are disordered. Residues 170–180 (QAQEHEQGRYN) are compositionally biased toward basic and acidic residues.

It belongs to the Casparian strip membrane proteins (CASP) family. As to quaternary structure, homodimer and heterodimers.

The protein resides in the cell membrane. This is CASP-like protein 2D1 from Sorghum bicolor (Sorghum).